The primary structure comprises 67 residues: uncharacterized protein (67 aa).

The helical transmembrane segment at 19–39 (ISFIIFFFFYFFFFYFFYGFW) threads the bilayer.

It localises to the membrane. This is an uncharacterized protein from Dictyostelium discoideum (Social amoeba).